Reading from the N-terminus, the 152-residue chain is UPF0756 membrane protein CA_C0092 (152 aa).

A run of 4 helical transmembrane segments spans residues 5-25 (IILV…VAIS), 50-70 (MFWG…QGNV), 82-102 (FVGI…GVGL), and 117-137 (LILG…GPLI).

The protein belongs to the UPF0756 family.

The protein localises to the cell membrane. This chain is UPF0756 membrane protein CA_C0092, found in Clostridium acetobutylicum (strain ATCC 824 / DSM 792 / JCM 1419 / IAM 19013 / LMG 5710 / NBRC 13948 / NRRL B-527 / VKM B-1787 / 2291 / W).